The primary structure comprises 263 residues: ABC transporter I family member 17 (263 aa).

An ABC transporter domain is found at 29–260; sequence IRVHDLTRVA…THPMAQRFLQ (232 aa). Position 62–69 (62–69) interacts with ATP; that stretch reads GPSGSGKS.

This sequence belongs to the ABC transporter superfamily. ABCI family.

The chain is ABC transporter I family member 17 (ABCI17) from Arabidopsis thaliana (Mouse-ear cress).